Reading from the N-terminus, the 968-residue chain is MDTVKSINKGYGKVDETQDLALKRKTRKRLYQIGISVAVLVAIIISSTVTIAIHSRKGNSPHPTPSSVPELTPAASLKTVCSVTNYPVSCFSSISKLPLSNTTDPEVIFRLSLQVVIDELNSIVELPKKLAEETDDEGLKSALSVCEHLLDLAIDRVNETVSAMEVVDGKKILNAATIDDLLTWLSAAVTYHGTCLDALDEISHTNSAIPLKLKSGMVNSTEFTSNSLAIVAKILSTISDFGIPIHGRRLLNSSPHATPISVPKLTPAASLRNVCSVTRYPASCVSSISKLPSSNTTDPEALFRLSLQVVINELNSIAGLPKKLAEETDDERLKSSLSVCGDVFNDAIDIVNDTISTMEEVGDGKKILKSSTIDEIQTWLSAAVTDHDTCLDALDELSQNKTEYANSPISLKLKSAMVNSRKFTSNSLAIIAKFPIHERHGVQSPRLRKSPHPTPSSVLRTVCNVTNYPASCISSISKLPLSKTTTDPKVLFRLSLQVTFDELNSIVGLPKKLAEETNDEGLKSALSVCADVFDLAVDSVNDTISSLDEVISGGKKNLNSSTIGDLITWLSSAVTDIGTCGDTLDEDNYNSPIPQKLKSAMVNSTEFTSNSLAIVAQVLKKPSKSRIPVQGRRLLNSNSFPNWVRPGVRRLLQAKNLTPHVTVAADGSGDVRTVNEAVWRVPKKGKTMFVIYVKAGTYVENVLMKKDKWNVFIYGDGRDKTIISGSTNMVDGVRTFNTSTFATEGKGFMMKDMGIINTAGPEKHQAVAFRSDSDRSVYYRCSFDGYQDTLYTHSNRQYYRNCDVTGTVDFIFGAGTVVFQGCSIRPRQPLPNQFNTITAEGTQEANQNTGISIHQCTISPNGNVTATTYLGRPWKLFSKTVIMQSVIGSFVNPAGWIAWNSTYDPPPRTIFYREYKNSGPGSDLSKRVKWAGYKPISSDDEAARFTVKYFLRGDDNWIPKAVMGMPPL.

Residues isoleucine 33 to isoleucine 53 traverse the membrane as a helical segment. A pectinesterase inhibitor 26 A region spans residues leucine 71 to isoleucine 230. Asparagine 101, asparagine 158, asparagine 219, asparagine 295, asparagine 352, asparagine 400, asparagine 464, asparagine 541, asparagine 559, and asparagine 603 each carry an N-linked (GlcNAc...) asparagine glycan. The segment at leucine 265–isoleucine 430 is pectinesterase inhibitor 26 B. A pectinesterase inhibitor 26 C region spans residues proline 453–isoleucine 614. The interval histidine 660–aspartate 954 is pectinesterase 26. Substrate is bound at residue threonine 735. An N-linked (GlcNAc...) asparagine glycan is attached at asparagine 737. Glutamine 765 contributes to the substrate binding site. The active-site Proton donor; for pectinesterase activity is aspartate 788. Residues cysteine 802 and cysteine 822 are joined by a disulfide bond. Catalysis depends on aspartate 809, which acts as the Nucleophile; for pectinesterase activity. The N-linked (GlcNAc...) asparagine glycan is linked to asparagine 863. 2 residues coordinate substrate: arginine 872 and tryptophan 874. A glycan (N-linked (GlcNAc...) asparagine) is linked at asparagine 900.

The protein in the N-terminal section; belongs to the PMEI family. In the C-terminal section; belongs to the pectinesterase family. Expressed in flowers.

The protein resides in the membrane. It carries out the reaction [(1-&gt;4)-alpha-D-galacturonosyl methyl ester](n) + n H2O = [(1-&gt;4)-alpha-D-galacturonosyl](n) + n methanol + n H(+). It participates in glycan metabolism; pectin degradation; 2-dehydro-3-deoxy-D-gluconate from pectin: step 1/5. Its function is as follows. Acts in the modification of cell walls via demethylesterification of cell wall pectin. In Arabidopsis thaliana (Mouse-ear cress), this protein is Putative pectinesterase/pectinesterase inhibitor 26 (PME26).